A 186-amino-acid polypeptide reads, in one-letter code: ATP-dependent protease subunit HslV (186 aa).

Thr14 is an active-site residue. Positions 168, 171, and 174 each coordinate Na(+).

Belongs to the peptidase T1B family. HslV subfamily. A double ring-shaped homohexamer of HslV is capped on each side by a ring-shaped HslU homohexamer. The assembly of the HslU/HslV complex is dependent on binding of ATP.

The protein localises to the cytoplasm. It carries out the reaction ATP-dependent cleavage of peptide bonds with broad specificity.. With respect to regulation, allosterically activated by HslU binding. Protease subunit of a proteasome-like degradation complex believed to be a general protein degrading machinery. In Bradyrhizobium sp. (strain ORS 278), this protein is ATP-dependent protease subunit HslV.